Here is a 510-residue protein sequence, read N- to C-terminus: Bifunctional purine biosynthesis protein PurH (510 aa).

One can recognise an MGS-like domain in the interval 1–145; it reads MTKRALLSVS…KNFAAVLPIV (145 aa).

The protein belongs to the PurH family.

The enzyme catalyses (6R)-10-formyltetrahydrofolate + 5-amino-1-(5-phospho-beta-D-ribosyl)imidazole-4-carboxamide = 5-formamido-1-(5-phospho-D-ribosyl)imidazole-4-carboxamide + (6S)-5,6,7,8-tetrahydrofolate. It catalyses the reaction IMP + H2O = 5-formamido-1-(5-phospho-D-ribosyl)imidazole-4-carboxamide. It functions in the pathway purine metabolism; IMP biosynthesis via de novo pathway; 5-formamido-1-(5-phospho-D-ribosyl)imidazole-4-carboxamide from 5-amino-1-(5-phospho-D-ribosyl)imidazole-4-carboxamide (10-formyl THF route): step 1/1. The protein operates within purine metabolism; IMP biosynthesis via de novo pathway; IMP from 5-formamido-1-(5-phospho-D-ribosyl)imidazole-4-carboxamide: step 1/1. The sequence is that of Bifunctional purine biosynthesis protein PurH from Lactiplantibacillus plantarum (strain ATCC BAA-793 / NCIMB 8826 / WCFS1) (Lactobacillus plantarum).